The primary structure comprises 437 residues: MNLIAVGVNHNTAPIELREKISLTDSMARSLLTELIDSKLASEALVLSTCNRTELYVVPAMPEVTANYLKDYLIAHKGVRKEVTRDHFFNYFACGAARHFYNVACAIDSLILGEVQIIGQVKTAYNRAVEMKTVGPILNKMCHTGFGLANRVRSKTKLTAGAVSVSYAAVELTQKIYSDVSTKNILLVGAGDTAKLAAKNLLDKRVRDFYITNRTYEKAELLAQELGTGKILPLEEMTERLHEFDIVVTAVGGNDHIIKKEHVAAAMQKRHRDPILILDLGLPRNVAPEVGQVNNVFLKDIDDLKMIIDSNLEKRRAEIPKVKHFIQKELIEYARWYFSLEVKPTIVDLQEKFFEIKALELARIKNKVSAEEYERMEQLSDRIIKKLLHFPITTLKQQTADTTDPVSFIRNIFDLKEQEEEFPGLTFPINLKEQNNN.

Residues 49–52 (TCNR), Ser-109, 114–116 (EVQ), and Gln-120 each bind substrate. Cys-50 functions as the Nucleophile in the catalytic mechanism. 189–194 (GAGDTA) lines the NADP(+) pocket.

It belongs to the glutamyl-tRNA reductase family. As to quaternary structure, homodimer.

It catalyses the reaction (S)-4-amino-5-oxopentanoate + tRNA(Glu) + NADP(+) = L-glutamyl-tRNA(Glu) + NADPH + H(+). Its pathway is porphyrin-containing compound metabolism; protoporphyrin-IX biosynthesis; 5-aminolevulinate from L-glutamyl-tRNA(Glu): step 1/2. It functions in the pathway porphyrin-containing compound metabolism; chlorophyll biosynthesis. In terms of biological role, catalyzes the NADPH-dependent reduction of glutamyl-tRNA(Glu) to glutamate 1-semialdehyde (GSA). The sequence is that of Glutamyl-tRNA reductase from Chloroherpeton thalassium (strain ATCC 35110 / GB-78).